Here is a 79-residue protein sequence, read N- to C-terminus: Small ribosomal subunit protein bS18 (79 aa).

The protein belongs to the bacterial ribosomal protein bS18 family. Part of the 30S ribosomal subunit. Forms a tight heterodimer with protein bS6.

Functionally, binds as a heterodimer with protein bS6 to the central domain of the 16S rRNA, where it helps stabilize the platform of the 30S subunit. This Onion yellows phytoplasma (strain OY-M) protein is Small ribosomal subunit protein bS18.